The primary structure comprises 574 residues: Phospholipase B-like protein A (574 aa).

The N-terminal stretch at 1–20 (MRVIRSLLLLTIAIIGSVLS) is a signal peptide. N-linked (GlcNAc...) asparagine glycosylation is found at Asn159, Asn195, and Asn415.

The protein belongs to the phospholipase B-like family.

It is found in the secreted. In terms of biological role, phospholipase that removes both fatty-acid chains from phosphatidylcholine and produces the water-soluble glycerophosphorylcholine. In addition to phosphatidylcholine deacylation, it also hydrolyzes phosphatidylinositol and phosphatidylethanolamine. In Dictyostelium discoideum (Social amoeba), this protein is Phospholipase B-like protein A (plbA).